Reading from the N-terminus, the 321-residue chain is GTP 3',8-cyclase (321 aa).

The Radical SAM core domain maps to 5 to 233; sequence SFNRVIDYIR…QGSSKIYTLE (229 aa). GTP is bound at residue Arg14. 2 residues coordinate [4Fe-4S] cluster: Cys21 and Cys25. Residue Tyr27 coordinates S-adenosyl-L-methionine. Cys28 serves as a coordination point for [4Fe-4S] cluster. Arg64 contributes to the GTP binding site. Gly68 lines the S-adenosyl-L-methionine pocket. A GTP-binding site is contributed by Ser95. Ser119 contributes to the S-adenosyl-L-methionine binding site. Position 155 (Lys155) interacts with GTP. Met189 contributes to the S-adenosyl-L-methionine binding site. [4Fe-4S] cluster-binding residues include Cys249 and Cys252. Residue 254–256 participates in GTP binding; that stretch reads RIR. Residue Cys266 coordinates [4Fe-4S] cluster.

It belongs to the radical SAM superfamily. MoaA family. In terms of assembly, monomer and homodimer. [4Fe-4S] cluster serves as cofactor.

The catalysed reaction is GTP + AH2 + S-adenosyl-L-methionine = (8S)-3',8-cyclo-7,8-dihydroguanosine 5'-triphosphate + 5'-deoxyadenosine + L-methionine + A + H(+). It participates in cofactor biosynthesis; molybdopterin biosynthesis. Functionally, catalyzes the cyclization of GTP to (8S)-3',8-cyclo-7,8-dihydroguanosine 5'-triphosphate. This is GTP 3',8-cyclase from Helicobacter pylori (strain HPAG1).